Consider the following 579-residue polypeptide: uncharacterized protein (579 aa).

Positions 449–577 constitute a GGDEF domain; it reads QKGVFILVDI…GKNRLMIHDS (129 aa).

This is an uncharacterized protein from Bacillus subtilis (strain 168).